We begin with the raw amino-acid sequence, 384 residues long: N-acetylneuraminate epimerase (384 aa).

An N-terminal signal peptide occupies residues 1–24 (MNMKTLLTYATLLSVTAFSHVVYA). 7 Kelch repeats span residues 46–90 (KVYV…SVIG), 92–145 (YIYL…YSPD), 147–184 (RQIL…RIVD), 185–230 (DYMG…VIEG), 233–281 (VTLI…VAGA), 303–352 (QAFE…TTSE), and 354–383 (VLIV…VEVI). Glutamate 239 functions as the Proton acceptor in the catalytic mechanism.

This sequence belongs to the NanM family. Homodimer.

Its subcellular location is the periplasm. It catalyses the reaction N-acetyl-alpha-neuraminate = N-acetyl-beta-neuraminate. In terms of biological role, converts alpha-N-acetylneuranimic acid (Neu5Ac) to the beta-anomer, accelerating the equilibrium between the alpha- and beta-anomers. Probably facilitates sialidase-negative bacteria to compete successfully for limited amounts of extracellular Neu5Ac, which is likely taken up in the beta-anomer. In addition, the rapid removal of sialic acid from solution might be advantageous to the bacterium to damp down host responses. The protein is N-acetylneuraminate epimerase of Vibrio cholerae serotype O1 (strain ATCC 39315 / El Tor Inaba N16961).